Consider the following 107-residue polypeptide: Disintegrin lebestatin (107 aa).

Positions 1-20 are cleaved as a signal peptide; the sequence is MIQVLLVIICLAVFPFQGSS. A propeptide spanning residues 21–64 is cleaved from the precursor; it reads KTLKSGNVNDYEVVNPGTVTGLPKGAVEEKHEPMKGNTLQKFPL. 4 cysteine pairs are disulfide-bonded: Cys-65/Cys-74, Cys-70/Cys-93, Cys-71/Cys-98, and Cys-83/Cys-100. Residues 65 to 105 form the Disintegrin domain; that stretch reads CTTGPCCRQCKLKPAGTTCWKTSRTSHYCTGKSCDCPSYPG. The Cell attachment site; atypical (KTS) signature appears at 85–87; it reads KTS. The propeptide occupies 106-107; it reads NG.

In terms of assembly, monomer. In terms of tissue distribution, expressed by the venom gland.

The protein resides in the secreted. Functionally, specifically interacts with the alpha-1/beta-1 integrin (ITGA1/ITGB1). Exhibits highly inhibitory effects on cell adhesion and cell migration to collagens I and IV. Also shows in vivo anti-angiogenic activity. The sequence is that of Disintegrin lebestatin from Macrovipera lebetinus (Levantine viper).